We begin with the raw amino-acid sequence, 185 residues long: Elongation factor P (185 aa).

Belongs to the elongation factor P family.

The protein resides in the cytoplasm. Its pathway is protein biosynthesis; polypeptide chain elongation. Its function is as follows. Involved in peptide bond synthesis. Stimulates efficient translation and peptide-bond synthesis on native or reconstituted 70S ribosomes in vitro. Probably functions indirectly by altering the affinity of the ribosome for aminoacyl-tRNA, thus increasing their reactivity as acceptors for peptidyl transferase. This chain is Elongation factor P, found in Bacillus pumilus (strain SAFR-032).